A 78-amino-acid polypeptide reads, in one-letter code: Dihydrofolate reductase type 2 (78 aa).

Residues Lys-32 to Ala-36 and Val-66 to Tyr-69 contribute to the NADP(+) site. Ile-68 provides a ligand contact to substrate.

Homotetramer.

The enzyme catalyses (6S)-5,6,7,8-tetrahydrofolate + NADP(+) = 7,8-dihydrofolate + NADPH + H(+). The protein operates within cofactor biosynthesis; tetrahydrofolate biosynthesis; 5,6,7,8-tetrahydrofolate from 7,8-dihydrofolate: step 1/1. Key enzyme in folate metabolism. Catalyzes an essential reaction for de novo glycine and purine synthesis, and for DNA precursor synthesis. In Escherichia coli, this protein is Dihydrofolate reductase type 2.